Reading from the N-terminus, the 1209-residue chain is Calcium-activated potassium channel subunit alpha-1 (1209 aa).

Residues 1-26 (MANGGGGGGGGSSGSSGGGGGGGGGE) show a composition bias toward gly residues. 2 disordered regions span residues 1–29 (MANG…ETAL) and 42–64 (LDAS…SVHE). At 1 to 87 (MANGGGGGGG…VPCDSRGQRM (87 aa)) the chain is on the extracellular side. Positions 45–61 (SSSSSSSSSSSSSSSSS) are enriched in low complexity. The helical transmembrane segment at 88 to 108 (WWAFLASSMVTFFGGLFIILL) threads the bilayer. Over 109–179 (WRTLKYLWTV…MISAQTLTGR (71 aa)) the chain is Cytoplasmic. S-palmitoyl cysteine attachment occurs at residues Cys119, Cys120, and Cys122. A helical transmembrane segment spans residues 180-200 (VLVVLVFALSIGALVIYFIDS). Over 201 to 215 (SNPIESCQNFYKDFT) the chain is Extracellular. A helical transmembrane segment spans residues 216–236 (LQIDMAFNVFFLLYFGLRFIA). Residues 237–240 (ANDK) lie on the Cytoplasmic side of the membrane. Residues 241–261 (LWFWLEVNSVVDFFTVPPVFV) traverse the membrane as a helical segment. The Extracellular portion of the chain corresponds to 262 to 265 (SVYL). Residues 266–286 (NRSWLGLRFLRALRLIQFSEI) form a helical; Voltage-sensor membrane-spanning segment. Over 287-301 (LQFLNILKTSNSIKL) the chain is Cytoplasmic. Residues 302–322 (VNLLSIFISTWLTAAGFIHLV) form a helical membrane-spanning segment. The Extracellular segment spans residues 323–336 (ENSGDPWENFQNNQ). Residues 337 to 359 (ALTYWECVYLLMVTMSTVGYGDV) constitute an intramembrane region (pore-forming). The Selectivity for potassium motif lies at 353–356 (TVGY). Residues 360–368 (YAKTTLGRL) are Extracellular-facing. The helical transmembrane segment at 369–389 (FMVFFILGGLAMFASYVPEII) threads the bilayer. Over 390 to 1209 (ELIGNRKKYG…DKQKKEMVYR (820 aa)) the chain is Cytoplasmic. The RCK N-terminal 1 domain maps to 408–550 (RKHIVVCGHI…WNWKEGDDAI (143 aa)). Mg(2+) contacts are provided by Glu440, Gln463, and Glu465. The tract at residues 557-577 (LGFIAQSCLAQGLSTMLANLF) is segment S7. Residues 614–634 (LSFPTVCELCFVKLKLLMIAI) form a segment S8 region. Positions 682-686 (CKACH) are heme-binding motif. Residues 704 to 734 (EDEQPPTLSPKKKQRNGGMRNSPNTSPKLMR) are disordered. The residue at position 710 (Thr710) is a Phosphothreonine. Phosphoserine occurs at positions 712, 725, and 729. Positions 784–804 (VLSGHVVVCIFGDVSSALIGL) are segment S9. Residues 786 to 930 (SGHVVVCIFG…MDRSSPDNSP (145 aa)) enclose the RCK N-terminal 2 domain. A Phosphothreonine modification is found at Thr917. Phosphoserine occurs at positions 925 and 929. Residues 977 to 999 (TELVNDTNVQFLDQDDDDDPDTE) carry the Calcium bowl motif. The Ca(2+) site is built by Gln986, Asp989, Asp992, and Asp994. The tract at residues 1006 to 1026 (FACGTAFAVSVLDSLMSATYF) is segment S10. Positions 1160-1185 (RASLSHSSHSSQSSSKKSSSVHSIPS) are enriched in low complexity. A disordered region spans residues 1160-1209 (RASLSHSSHSSQSSSKKSSSVHSIPSTANRPNRPKSRESRDKQKKEMVYR). The segment covering 1194 to 1209 (KSRESRDKQKKEMVYR) has biased composition (basic and acidic residues). 2 positions are modified to phosphoserine: Ser1195 and Ser1198.

It belongs to the potassium channel family. Calcium-activated (TC 1.A.1.3) subfamily. KCa1.1/KCNMA1 sub-subfamily. As to quaternary structure, homotetramer; which constitutes the calcium-activated potassium channel. Interacts with beta subunits KCNMB1, KCNMB2, KCNMB3 and KCNMB4. Interacts with gamma subunits LRRC26, LRRC38, LRRC52 and LRRC55. Beta and gamma subunits are accessory, and modulate its activity. Interacts with RAB11B. Post-translationally, phosphorylated. Phosphorylation by kinases such as PKA and/or PKG. In smooth muscles, phosphorylation affects its activity. Palmitoylation by ZDHHC22 and ZDHHC23 within the intracellular linker between the S0 and S1 transmembrane domains regulates localization to the plasma membrane. Depalmitoylated by LYPLA1 and LYPLAL1, leading to retard exit from the trans-Golgi network.

The protein localises to the cell membrane. Its subcellular location is the endoplasmic reticulum membrane. It carries out the reaction K(+)(in) = K(+)(out). Its activity is regulated as follows. Ethanol and carbon monoxide-bound heme increase channel activation. With respect to regulation, heme inhibits channel activation. Functionally, potassium channel activated by both membrane depolarization or increase in cytosolic Ca(2+) that mediates export of K(+). It is also activated by the concentration of cytosolic Mg(2+). Its activation dampens the excitatory events that elevate the cytosolic Ca(2+) concentration and/or depolarize the cell membrane. It therefore contributes to repolarization of the membrane potential. Plays a key role in controlling excitability in a number of systems, such as regulation of the contraction of smooth muscle, the tuning of hair cells in the cochlea, regulation of transmitter release, and innate immunity. In smooth muscles, its activation by high level of Ca(2+), caused by ryanodine receptors in the sarcoplasmic reticulum, regulates the membrane potential. In cochlea cells, its number and kinetic properties partly determine the characteristic frequency of each hair cell and thereby helps to establish a tonotopic map. Kinetics of KCNMA1 channels are determined by alternative splicing, phosphorylation status and its combination with modulating beta subunits. Highly sensitive to both iberiotoxin (IbTx) and charybdotoxin (CTX). Its function is as follows. Potassium channel activated by both membrane depolarization or increase in cytosolic Ca(2+) that mediates export of K(+). The chain is Calcium-activated potassium channel subunit alpha-1 (Kcnma1) from Rattus norvegicus (Rat).